Reading from the N-terminus, the 209-residue chain is Claudin-4 (209 aa).

Topologically, residues 1 to 7 (MASMGLQ) are cytoplasmic. Residues 1–103 (MASMGLQVMG…GVLLSVVGGK (103 aa)) form an interaction with EPHA2 region. Residues 8 to 28 (VMGIALAVLGWLAVMLCCALP) form a helical membrane-spanning segment. The Extracellular segment spans residues 29–81 (MWRVTAFIGSNIVTSQTIWEGLWMNCVVQSTGQMQCKVYDSLLALPQDLQAAR). Cys-54 and Cys-64 are disulfide-bonded. The helical transmembrane segment at 82–102 (ALVIISIIVAALGVLLSVVGG) threads the bilayer. Topologically, residues 103–117 (KCTNCLEDESAKAKT) are cytoplasmic. A helical transmembrane segment spans residues 118 to 138 (MIVAGVVFLLAGLMVIVPVSW). Topologically, residues 139 to 160 (TAHNIIQDFYNPLVASGQKREM) are extracellular. The helical transmembrane segment at 161–181 (GASLYVGWAASGLLLLGGGLL) threads the bilayer. Residues 182-209 (CCNCPPRTDKPYSAKYSAARSAAASNYV) lie on the Cytoplasmic side of the membrane. Position 208 is a phosphotyrosine; by EPHA2 (Tyr-208). The tract at residues 208-209 (YV) is interactions with TJP1, TJP2 and TJP3.

This sequence belongs to the claudin family. Can form heteropolymeric strands with other claudins. Interacts with CLDN8. Interacts with CLDN1. Directly interacts with TJP1/ZO-1. Interacts with TJP2/ZO-2 and TJP3/ZO-3. Interacts with EPHA2; phosphorylates CLDN4 and may regulate tight junctions. As to quaternary structure, (Microbial infection) Interacts (via both extracellular domains) with Clostridium perfringens enterotoxin CPE; the interaction may disrupt claudin assembly in tight junctions. In terms of processing, phosphorylated. Phosphorylation by EPHA2 is stimulated by EFNA1 and alters interaction with TJP1.

It is found in the cell junction. The protein localises to the tight junction. It localises to the cell membrane. The catalysed reaction is chloride(in) = chloride(out). It catalyses the reaction bromide(in) = bromide(out). It carries out the reaction iodide(out) = iodide(in). The enzyme catalyses fluoride(in) = fluoride(out). In terms of biological role, can associate with other claudins to regulate tight junction structural and functional strand dynamics. May coassemble with CLDN8 into tight junction strands containing anion-selective channels that convey paracellular chloride permeability in renal collecting ducts. May integrate into CLDN3 strands to modulate localized tight junction barrier properties. May disrupt strand assembly of channel-forming CLDN2 and CLDN15 and inhibit cation conductance. Cannot form tight junction strands on its own. This is Claudin-4 from Homo sapiens (Human).